The primary structure comprises 228 residues: MERSHLAVLLGLLAFAAGVPAAAAATAVEGAQAATAEASCEPSILATQVSLFCAPDMPTAQCCEPVVASVDLGGGVPCLCRVAAEPQLIISGLNATHLLTLYAACGGLRPGGARLAAACEGPAPPASIVTAPPPPVAFRRKPPAREAPPPPPAAEKLSPPPQQHDDSDHNKRVGPLPRGSPPPYAQSVPVGPAAAPPPPRSGASSSLQAPLAATTTIVAITLIAAAQY.

Residues 1–24 form the signal peptide; that stretch reads MERSHLAVLLGLLAFAAGVPAAAA. 3 cysteine pairs are disulfide-bonded: Cys-40–Cys-62, Cys-63–Cys-105, and Cys-78–Cys-119. An N-linked (GlcNAc...) asparagine glycan is attached at Asn-94. Positions 124–207 are disordered; the sequence is PPASIVTAPP…PPRSGASSSL (84 aa). Residues 145–162 show a composition bias toward pro residues; it reads REAPPPPPAAEKLSPPPQ.

This sequence belongs to the plant LTP family. Expressed in young panicles. Specifically expressed in pollen mother cells and young microspores.

Its subcellular location is the cell membrane. Functionally, plant non-specific lipid-transfer protein that binds phospholipids in vitro. Required for correct pollen exine patterning by controlling the continuity and homogeneity of the primexine distribution. The sequence is that of Non-specific lipid-transfer protein EPAD1 from Oryza sativa subsp. japonica (Rice).